Here is a 582-residue protein sequence, read N- to C-terminus: Protein bps2 (582 aa).

28–35 lines the ATP pocket; the sequence is APNAYGKT. Residues 243–281 adopt a coiled-coil conformation; that stretch reads RQSYERQLQEINAQLQKITAQRNEAEIEIRLLEKVLDQI. Positions 243 to 351 constitute a Zinc-hook domain; that stretch reads RQSYERQLQE…KLKELDQISS (109 aa). Residues cysteine 292 and cysteine 295 each coordinate Zn(2+). Residues 320 to 351 adopt a coiled-coil conformation; the sequence is SLYAGIKKEADELLSKKSEIEKKLKELDQISS.

This chain is Protein bps2 (bps2), found in Acidianus ambivalens (Desulfurolobus ambivalens).